A 66-amino-acid polypeptide reads, in one-letter code: Protein KleD (66 aa).

Residues 33-52 (VAVRSGNEWQQVTKWVEPAR) constitute a DNA-binding region (H-T-H motif).

The polypeptide is Protein KleD (kleD) (Escherichia coli).